We begin with the raw amino-acid sequence, 199 residues long: Interferon kappa (199 aa).

Residues 1 to 21 (MTPKFLWLVALVALYIPPIQS) form the signal peptide. 2 disulfides stabilise this stretch: Cys24/Cys119 and Cys49/Cys162.

Belongs to the alpha/beta interferon family. As to expression, expressed at low levels in peritoneal macrophages.

The protein localises to the secreted. May play a role in the regulation of immune cell function. The polypeptide is Interferon kappa (Ifnk) (Mus musculus (Mouse)).